A 608-amino-acid polypeptide reads, in one-letter code: 1-deoxy-D-xylulose-5-phosphate synthase (608 aa).

Residues His-66 and 107–109 each bind thiamine diphosphate; that span reads GHA. Mg(2+) is bound at residue Asp-138. Thiamine diphosphate contacts are provided by residues 139-140, Asn-167, Phe-277, and Glu-350; that span reads GA. Residue Asn-167 participates in Mg(2+) binding.

Belongs to the transketolase family. DXPS subfamily. Homodimer. The cofactor is Mg(2+). Thiamine diphosphate serves as cofactor.

It carries out the reaction D-glyceraldehyde 3-phosphate + pyruvate + H(+) = 1-deoxy-D-xylulose 5-phosphate + CO2. Its pathway is metabolic intermediate biosynthesis; 1-deoxy-D-xylulose 5-phosphate biosynthesis; 1-deoxy-D-xylulose 5-phosphate from D-glyceraldehyde 3-phosphate and pyruvate: step 1/1. Its function is as follows. Catalyzes the acyloin condensation reaction between C atoms 2 and 3 of pyruvate and glyceraldehyde 3-phosphate to yield 1-deoxy-D-xylulose-5-phosphate (DXP). The protein is 1-deoxy-D-xylulose-5-phosphate synthase of Thermotoga petrophila (strain ATCC BAA-488 / DSM 13995 / JCM 10881 / RKU-1).